We begin with the raw amino-acid sequence, 186 residues long: MGLKADNWIRKMALEHKMIEPFCEANIGKGVVSYGLSSYGYDICVGREFKIFTNVNSTVVDPKNFVEENVVDFEGDVCIVPANSFALARTIEYFKMPDDVLAICLGKSTYARCGIIVNVTPFEPGFEGHITIEISNTTPLPAKIYANEGIAQVLFLQGDEKCDTTYKDKKGKYQAQTGITLPRILK.

107 to 112 is a dCTP binding site; sequence KSTYAR. The active-site Proton donor/acceptor is the Glu-133. The dCTP site is built by Gln-152, Tyr-166, and Gln-176.

It belongs to the dCTP deaminase family. Homotrimer.

It catalyses the reaction dCTP + H2O + H(+) = dUTP + NH4(+). It functions in the pathway pyrimidine metabolism; dUMP biosynthesis; dUMP from dCTP (dUTP route): step 1/2. In terms of biological role, catalyzes the deamination of dCTP to dUTP. This Campylobacter jejuni subsp. doylei (strain ATCC BAA-1458 / RM4099 / 269.97) protein is dCTP deaminase.